A 60-amino-acid polypeptide reads, in one-letter code: Cytotoxin SP15a (60 aa).

4 disulfides stabilise this stretch: C3/C21, C14/C38, C42/C53, and C54/C59.

Belongs to the three-finger toxin family. Short-chain subfamily. Type IA cytotoxin sub-subfamily. In terms of assembly, monomer in solution; Homodimer and oligomer in the presence of negatively charged lipids forming a pore with a size ranging between 20 and 30 Angstroms. Expressed by the venom gland.

The protein resides in the secreted. It localises to the target cell membrane. Functionally, shows cytolytic activity on many different cells by forming pore in lipid membranes. In vivo, increases heart rate or kills the animal by cardiac arrest. In addition, it binds to heparin with high affinity, interacts with Kv channel-interacting protein 1 (KCNIP1) in a calcium-independent manner, and binds to integrin alpha-V/beta-3 (ITGAV/ITGB3) with moderate affinity. In Naja atra (Chinese cobra), this protein is Cytotoxin SP15a.